A 274-amino-acid chain; its full sequence is Guanylyl cyclase 1 (274 aa).

In terms of assembly, functions both as monomer and homooligomer. Mg(2+) serves as cofactor.

It catalyses the reaction GTP = 3',5'-cyclic GMP + diphosphate. It participates in nucleotide metabolism. Its function is as follows. Magnesium-dependent guanylyl cyclase that catalyzes the formation of guanosine 3',5'-cyclic monophosphate (cGMP) from guanosine 5'-triphosphate (GTP). Can also use ATP as substrate with a low activity. The polypeptide is Guanylyl cyclase 1 (Arabidopsis thaliana (Mouse-ear cress)).